Here is a 234-residue protein sequence, read N- to C-terminus: MPGQIPLIGEKLPEMVVHTDHGPKKLPDDYKGKWLVIFSHPADFTPVCTTEFVAFAKRYEDFKKLNTELLGLSVDNSFSHIKWKEWIKEKLNVEIPFPIIADPLGQVATKLGMLHPEGGVVTVRAVFIVDPEGKVRAILYYPLNVGRNIDEILRLLKALQVTDKLGRATPANWPCNEIVKDHVIVPPASTEQEAKERLQKYECFDWWFCHEKAPAEDVEEAKKFLERPAKELCK.

Residues 6 to 161 form the Thioredoxin domain; the sequence is PLIGEKLPEM…ILRLLKALQV (156 aa). Residue Cys-48 is the Cysteine sulfenic acid (-SOH) intermediate of the active site. Arg-124 lines the substrate pocket. Cysteines 203 and 209 form a disulfide.

This sequence belongs to the peroxiredoxin family. Prx6 subfamily. In terms of assembly, homodecamer. Pentamer of dimers that assemble into a ring structure.

The protein localises to the cytoplasm. It carries out the reaction a hydroperoxide + [thioredoxin]-dithiol = an alcohol + [thioredoxin]-disulfide + H2O. Thiol-specific peroxidase that catalyzes the reduction of hydrogen peroxide and organic hydroperoxides to water and alcohols, respectively. Plays a role in cell protection against oxidative stress by detoxifying peroxides. The polypeptide is Peroxiredoxin (Ignicoccus hospitalis (strain KIN4/I / DSM 18386 / JCM 14125)).